Consider the following 164-residue polypeptide: 2-C-methyl-D-erythritol 2,4-cyclodiphosphate synthase (164 aa).

Asp-9 and His-11 together coordinate a divalent metal cation. Residues 9-11 (DAH) and 36-37 (HS) contribute to the 4-CDP-2-C-methyl-D-erythritol 2-phosphate site. His-44 is a binding site for a divalent metal cation. Residues 58–60 (DLG), 63–67 (FPDSD), 134–137 (TTTE), Phe-141, and Arg-144 contribute to the 4-CDP-2-C-methyl-D-erythritol 2-phosphate site.

Belongs to the IspF family. Homotrimer. The cofactor is a divalent metal cation.

It carries out the reaction 4-CDP-2-C-methyl-D-erythritol 2-phosphate = 2-C-methyl-D-erythritol 2,4-cyclic diphosphate + CMP. It functions in the pathway isoprenoid biosynthesis; isopentenyl diphosphate biosynthesis via DXP pathway; isopentenyl diphosphate from 1-deoxy-D-xylulose 5-phosphate: step 4/6. Its function is as follows. Involved in the biosynthesis of isopentenyl diphosphate (IPP) and dimethylallyl diphosphate (DMAPP), two major building blocks of isoprenoid compounds. Catalyzes the conversion of 4-diphosphocytidyl-2-C-methyl-D-erythritol 2-phosphate (CDP-ME2P) to 2-C-methyl-D-erythritol 2,4-cyclodiphosphate (ME-CPP) with a corresponding release of cytidine 5-monophosphate (CMP). The sequence is that of 2-C-methyl-D-erythritol 2,4-cyclodiphosphate synthase from Alkalilimnicola ehrlichii (strain ATCC BAA-1101 / DSM 17681 / MLHE-1).